A 112-amino-acid polypeptide reads, in one-letter code: UPF0060 membrane protein SAV_4756 (112 aa).

4 consecutive transmembrane segments (helical) span residues 8–28 (ALFV…WQGV), 33–53 (GWLW…VATL), 62–82 (ILAA…MVAD), and 91–111 (VTGA…PRGG).

Belongs to the UPF0060 family.

The protein localises to the cell membrane. The chain is UPF0060 membrane protein SAV_4756 from Streptomyces avermitilis (strain ATCC 31267 / DSM 46492 / JCM 5070 / NBRC 14893 / NCIMB 12804 / NRRL 8165 / MA-4680).